The chain runs to 595 residues: Elongation factor 4 (595 aa).

The tr-type G domain maps to 2-184 (SHIRNFSIIA…RLVATIPPPT (183 aa)). Residues 14 to 19 (DHGKST) and 131 to 134 (NKMD) contribute to the GTP site.

This sequence belongs to the TRAFAC class translation factor GTPase superfamily. Classic translation factor GTPase family. LepA subfamily.

It localises to the cell inner membrane. It carries out the reaction GTP + H2O = GDP + phosphate + H(+). In terms of biological role, required for accurate and efficient protein synthesis under certain stress conditions. May act as a fidelity factor of the translation reaction, by catalyzing a one-codon backward translocation of tRNAs on improperly translocated ribosomes. Back-translocation proceeds from a post-translocation (POST) complex to a pre-translocation (PRE) complex, thus giving elongation factor G a second chance to translocate the tRNAs correctly. Binds to ribosomes in a GTP-dependent manner. In Pseudomonas syringae pv. tomato (strain ATCC BAA-871 / DC3000), this protein is Elongation factor 4.